The following is a 328-amino-acid chain: B3 domain-containing protein At5g60140 (328 aa).

Positions 13–109 (SKFFKPYLPS…FFNFSIFDHE (97 aa)) form a DNA-binding region, TF-B3. A disordered region spans residues 145–221 (LNSDDSDDSD…EDEDDLEDED (77 aa)). Composition is skewed to acidic residues over residues 148–182 (DDSD…AEDG) and 190–221 (GLED…EDED).

It localises to the nucleus. The polypeptide is B3 domain-containing protein At5g60140 (Arabidopsis thaliana (Mouse-ear cress)).